The following is a 96-amino-acid chain: Aspartyl/glutamyl-tRNA(Asn/Gln) amidotransferase subunit C (96 aa).

The protein belongs to the GatC family. As to quaternary structure, heterotrimer of A, B and C subunits.

The catalysed reaction is L-glutamyl-tRNA(Gln) + L-glutamine + ATP + H2O = L-glutaminyl-tRNA(Gln) + L-glutamate + ADP + phosphate + H(+). The enzyme catalyses L-aspartyl-tRNA(Asn) + L-glutamine + ATP + H2O = L-asparaginyl-tRNA(Asn) + L-glutamate + ADP + phosphate + 2 H(+). Its function is as follows. Allows the formation of correctly charged Asn-tRNA(Asn) or Gln-tRNA(Gln) through the transamidation of misacylated Asp-tRNA(Asn) or Glu-tRNA(Gln) in organisms which lack either or both of asparaginyl-tRNA or glutaminyl-tRNA synthetases. The reaction takes place in the presence of glutamine and ATP through an activated phospho-Asp-tRNA(Asn) or phospho-Glu-tRNA(Gln). The polypeptide is Aspartyl/glutamyl-tRNA(Asn/Gln) amidotransferase subunit C (Leptospira interrogans serogroup Icterohaemorrhagiae serovar copenhageni (strain Fiocruz L1-130)).